The sequence spans 249 residues: Fasciclin-like arabinogalactan protein 12 (249 aa).

An N-terminal signal peptide occupies residues 1-24 (MEHSLIILLFTVLLLLTTTPGILS). The FAS1 domain occupies 37–181 (PTNVTKILEK…LAVYQVDKVL (145 aa)). N-linked (GlcNAc...) asparagine glycosylation is found at Asn39, Asn71, Asn143, Asn152, and Asn159. A disordered region spans residues 186–219 (VFDPRPPAPAPAPSVSKSKKKKDDSDSSSDDSPA). Asp220 carries GPI-anchor amidated aspartate lipidation. Positions 221-249 (ASFALRNVGSVCDAVSFCVMSVMLAWFYL) are cleaved as a propeptide — removed in mature form.

It belongs to the fasciclin-like AGP family.

Its subcellular location is the cell membrane. May be a cell surface adhesion protein. The polypeptide is Fasciclin-like arabinogalactan protein 12 (FLA12) (Arabidopsis thaliana (Mouse-ear cress)).